A 330-amino-acid chain; its full sequence is Aquaporin-3 (330 aa).

Residues 1–40 (MSATPIIHLRDVKKRTGVLNAWERVRNKPQVHWAMECFAE) lie on the Cytoplasmic side of the membrane. A helical membrane pass occupies residues 41–61 (ALGVFFYVYFGLGSTAAWVIG). The Extracellular portion of the chain corresponds to 62–71 (NILKQSGLSS). The chain crosses the membrane as a helical span at residues 72–92 (VFQIGFAYAFGILFAIGVCAA). Over 93-124 (TSGGHFNPCVTIAFTIFRGFPPLKAVRYIVAQ) the chain is Cytoplasmic. The NPA 1 signature appears at 99–101 (NPC). A helical transmembrane segment spans residues 125-145 (ILGAYIASALVYNQWKVLIVE). Topologically, residues 146 to 157 (SELLLKQAGVYE) are extracellular. A helical membrane pass occupies residues 158–178 (TTMFTPNGPAGIFALYLLPGA). At 179–183 (QTLPR) the chain is on the cytoplasmic side. A helical membrane pass occupies residues 184–204 (AFLNEFVNCFVLALVIWAALD). Residues 205–207 (PTS) are Extracellular-facing. Residues 208 to 228 (FMIPPVMAPFIIAAAYAGSIW) form a helical membrane-spanning segment. The Cytoplasmic portion of the chain corresponds to 229-264 (GYAVPAISLNSARDIGCRLFALTIWGKSAAGGSYSA). Positions 238 to 240 (NSA) match the NPA 2 motif. A helical membrane pass occupies residues 265–285 (IAALVNIPATLLAAVVYELFL). Topologically, residues 286-330 (VDSDRVVAGSHLEFMNVAANHRRHRQQAEDDNLVEADDSSQEKPV) are extracellular. Positions 308–330 (RHRQQAEDDNLVEADDSSQEKPV) are disordered. The span at 314–324 (EDDNLVEADDS) shows a compositional bias: acidic residues.

It belongs to the MIP/aquaporin (TC 1.A.8) family.

The protein localises to the cell membrane. It carries out the reaction H2O(in) = H2O(out). It catalyses the reaction CO2(out) = CO2(in). Functionally, water channel required to facilitate the transport of water across membranes. Also mediates the transport of carbon dioxide across the membrane. The polypeptide is Aquaporin-3 (Laccaria bicolor (Bicoloured deceiver)).